A 361-amino-acid chain; its full sequence is P2Y purinoceptor 4 (361 aa).

Topologically, residues 1–30 (MTSADSLLFTSLGPSPSSGDGDCKFNEEFK) are extracellular. The chain crosses the membrane as a helical span at residues 31–58 (FILLPLSYAVVFVLGLALNAPTLWLFLF). At 59 to 68 (RLRPWDATAT) the chain is on the cytoplasmic side. A helical transmembrane segment spans residues 69-91 (YMFHLALSDTLYVLSLPTLVYYY). The Extracellular portion of the chain corresponds to 92–108 (AARNHWPFGTGFCKFVR). Cysteines 104 and 181 form a disulfide. Residues 109 to 127 (FLFYWNLYCSVLFLTCISV) form a helical membrane-spanning segment. The Cytoplasmic segment spans residues 128 to 149 (HRYMGICHPLRAIRWGRPRFAG). Residues 150 to 170 (LLCLGVWLVVAGCLVPNLFFV) form a helical membrane-spanning segment. The Extracellular portion of the chain corresponds to 171 to 192 (TTNANGTTILCHDTTLPEEFDH). An N-linked (GlcNAc...) asparagine glycan is attached at N175. The helical transmembrane segment at 193–218 (YVYFSSTIMVLLFGFPFLITLVCYGL) threads the bilayer. At 219–242 (MARRLYRPLPGAGQSSSRLRSLRT) the chain is on the cytoplasmic side. Residues 243 to 265 (IAVVLTVFAVCFVPFHITRTIYY) form a helical membrane-spanning segment. At 266 to 283 (LARLLNAECRVLNIVNVV) the chain is on the extracellular side. The chain crosses the membrane as a helical span at residues 284 to 305 (YKVTRPLASANSCLDPVLYLFT). Residues 306–361 (GDKYRNQLQQLCRGSTPKRRTTASSLALVTLHEESISRWADIHQDSIFPAYEGDRL) lie on the Cytoplasmic side of the membrane.

It belongs to the G-protein coupled receptor 1 family. In terms of processing, phosphorylation of Ser-329 and Ser-330 is a key step in agonist-dependent desensitization and loss of surface P2RY4. This phosphorylation does not involve PKC, nor other calcium-activated kinases. Expressed in the liver, intestine, stomach, bladder and lung.

Its subcellular location is the cell membrane. Receptor for ATP and UTP coupled to G-proteins that activate a phosphatidylinositol-calcium second messenger system. This is P2Y purinoceptor 4 (P2ry4) from Mus musculus (Mouse).